The chain runs to 126 residues: Small ribosomal subunit protein uS8 (126 aa).

It belongs to the universal ribosomal protein uS8 family. Part of the 30S ribosomal subunit. Contacts proteins S5 and S12.

Functionally, one of the primary rRNA binding proteins, it binds directly to 16S rRNA central domain where it helps coordinate assembly of the platform of the 30S subunit. The chain is Small ribosomal subunit protein uS8 from Nitratidesulfovibrio vulgaris (strain ATCC 29579 / DSM 644 / CCUG 34227 / NCIMB 8303 / VKM B-1760 / Hildenborough) (Desulfovibrio vulgaris).